A 295-amino-acid chain; its full sequence is Protease HtpX (295 aa).

The next 2 helical transmembrane spans lie at 4–24 (ILLF…TLSL) and 42–62 (QLLV…LFIS). Position 147 (H147) interacts with Zn(2+). E148 is a catalytic residue. H151 is a Zn(2+) binding site. 2 helical membrane-spanning segments follow: residues 158–178 (VTLA…ARII) and 199–219 (ITTI…VMWF). A Zn(2+)-binding site is contributed by E224.

It belongs to the peptidase M48B family. Zn(2+) is required as a cofactor.

The protein localises to the cell inner membrane. This is Protease HtpX from Pseudomonas syringae pv. syringae (strain B728a).